The sequence spans 412 residues: CHRNA7-FAM7A fusion protein (412 aa).

The next 5 membrane-spanning stretches (helical) occupy residues 144 to 164, 172 to 192, 205 to 225, 240 to 254, and 380 to 400; these read GLNL…VFLL, ISLG…VAEI, QYFA…VIVL, WTRV…WFLR, and LCLM…LMSA.

Belongs to the ligand-gated ion channel (TC 1.A.9) family. In terms of tissue distribution, expressed in hippocampus.

It is found in the membrane. The protein is CHRNA7-FAM7A fusion protein (CHRFAM7A) of Homo sapiens (Human).